We begin with the raw amino-acid sequence, 617 residues long: tRNA-dihydrouridine(47) synthase [NAD(P)(+)] (617 aa).

A C3H1-type zinc finger spans residues Lys42–Glu70. Residues Glu160 to Ser193 are disordered. FMN contacts are provided by residues Pro245–Thr247 and Gln308. The Proton donor role is filled by Cys340. FMN is bound by residues Lys380, His411, Asn460–Asp462, and Ala483–Arg484.

It belongs to the Dus family. Dus3 subfamily. FMN is required as a cofactor.

Its subcellular location is the cytoplasm. The protein localises to the nucleus. The enzyme catalyses 5,6-dihydrouridine(47) in tRNA + NAD(+) = uridine(47) in tRNA + NADH + H(+). It carries out the reaction 5,6-dihydrouridine(47) in tRNA + NADP(+) = uridine(47) in tRNA + NADPH + H(+). The catalysed reaction is a 5,6-dihydrouridine in mRNA + NAD(+) = a uridine in mRNA + NADH + H(+). It catalyses the reaction a 5,6-dihydrouridine in mRNA + NADP(+) = a uridine in mRNA + NADPH + H(+). Its function is as follows. Catalyzes the synthesis of dihydrouridine, a modified base, in various RNAs, such as tRNAs and mRNAs. Modifies the uridine in position 47 (U47) in the D-loop of tRNAs. Also able to mediate formation of dihydrouridine outside of the D-loop of tRNAs. Catalyzes the synthesis of dihydrouridine in some mRNAs, thereby affecting their translation. Dus3-mediated dihydrouridylation of the mRNA encoding alpha-tubulin nda2 is required for meiotic chromosome segregation. The chain is tRNA-dihydrouridine(47) synthase [NAD(P)(+)] from Schizosaccharomyces pombe (strain 972 / ATCC 24843) (Fission yeast).